Reading from the N-terminus, the 480-residue chain is Probable serine/threonine-protein phosphatase 2A regulatory subunit B'' subunit TON2 (480 aa).

EF-hand domains are found at residues 186–221 (VSLT…LIPN), 294–329 (TSAQ…TLTE), and 369–404 (DTPE…VHQK). Positions 307, 309, 311, 313, and 318 each coordinate Ca(2+).

As to quaternary structure, interacts with PP2AA1. As to expression, widely expressed.

The protein resides in the cytoplasm. It is found in the cytoskeleton. In terms of biological role, probable regulatory subunit of type 2A protein phosphatase involved in the control of the dynamic organization of the cortical cytoskeleton. Plays an important role in the organization of interphase microtubule arrays in part through the regulation of nucleation geometry. Required for the reorganization of cortical arrays in response to light. The polypeptide is Probable serine/threonine-protein phosphatase 2A regulatory subunit B'' subunit TON2 (TON2) (Arabidopsis thaliana (Mouse-ear cress)).